The sequence spans 188 residues: MSIMSDNWIKKMAESKNMISPFVDKQVRARNNQQILSYGLSSYGYDARVSNEFKIFTNTKPSIIDPKKFDQDCLITKISDICIIPPNSFALGTTIEYFKMPRDVIAICIGKSTYARCGIIINVTPLEPECEGHITLEFSNTTPLPAKIYAGEGACQFLFFKGDQPCNTSYLDRYGRYTKQIGVTLPTV.

DCTP is bound by residues 111 to 116 (KSTYAR), 135 to 137 (TLE), Gln156, Tyr170, Lys179, and Gln180. The Proton donor/acceptor role is filled by Glu137.

It belongs to the dCTP deaminase family. In terms of assembly, homotrimer.

It carries out the reaction dCTP + H2O + H(+) = dUTP + NH4(+). It participates in pyrimidine metabolism; dUMP biosynthesis; dUMP from dCTP (dUTP route): step 1/2. Catalyzes the deamination of dCTP to dUTP. The polypeptide is dCTP deaminase (Orientia tsutsugamushi (strain Boryong) (Rickettsia tsutsugamushi)).